A 255-amino-acid polypeptide reads, in one-letter code: Putative glycyl-radical enzyme activating enzyme MJ1632 (255 aa).

One can recognise a Radical SAM core domain in the interval 30–245 (SHISLSDKIT…SNVSCSLDFK (216 aa)). [4Fe-4S] cluster-binding residues include Cys-45, Cys-49, and Cys-52. Residues 51–53 (YCF), Gly-88, and 134–136 (DLK) each bind S-adenosyl-L-methionine.

The protein belongs to the organic radical-activating enzymes family. [4Fe-4S] cluster is required as a cofactor.

The catalysed reaction is glycyl-[protein] + reduced [flavodoxin] + S-adenosyl-L-methionine = glycin-2-yl radical-[protein] + semiquinone [flavodoxin] + 5'-deoxyadenosine + L-methionine + H(+). The protein is Putative glycyl-radical enzyme activating enzyme MJ1632 of Methanocaldococcus jannaschii (strain ATCC 43067 / DSM 2661 / JAL-1 / JCM 10045 / NBRC 100440) (Methanococcus jannaschii).